We begin with the raw amino-acid sequence, 145 residues long: Dihydrolipoyllysine-residue succinyltransferase component of 2-oxoglutarate dehydrogenase complex, mitochondrial (145 aa).

A Lipoyl-binding domain is found at 4 to 31 (ITVQTPAFAESVTEGDVRVEGGTPLFTL). At Ser-14 the chain carries Phosphoserine. N6-acetyllysine occurs at positions 36 and 66. Active-site residues include His-119 and Asp-123.

It belongs to the 2-oxoacid dehydrogenase family. The 2-oxoglutarate dehydrogenase complex is composed of OGDH (2-oxoglutarate dehydrogenase; E1), DLST (dihydrolipoamide succinyltransferase; E2), DLD (dihydrolipoamide dehydrogenase; E3) and the assembly factor KGD4. It contains multiple copies of the three enzymatic components (E1, E2 and E3). In the nucleus, the 2-oxoglutarate dehydrogenase complex associates with KAT2A. Interacts with ABHD11; this interaction maintains the functional lipoylation of the 2-oxoglutarate dehydrogenase complex. Requires (R)-lipoate as cofactor.

The protein resides in the mitochondrion matrix. Its subcellular location is the nucleus. The enzyme catalyses N(6)-[(R)-dihydrolipoyl]-L-lysyl-[protein] + succinyl-CoA = N(6)-[(R)-S(8)-succinyldihydrolipoyl]-L-lysyl-[protein] + CoA. It participates in amino-acid degradation; L-lysine degradation via saccharopine pathway; glutaryl-CoA from L-lysine: step 6/6. Its pathway is carbohydrate metabolism; tricarboxylic acid cycle. In terms of biological role, dihydrolipoamide succinyltransferase (E2) component of the 2-oxoglutarate dehydrogenase complex. The 2-oxoglutarate dehydrogenase complex catalyzes the overall conversion of 2-oxoglutarate to succinyl-CoA and CO(2). The 2-oxoglutarate dehydrogenase complex is mainly active in the mitochondrion. A fraction of the 2-oxoglutarate dehydrogenase complex also localizes in the nucleus and is required for lysine succinylation of histones: associates with KAT2A on chromatin and provides succinyl-CoA to histone succinyltransferase KAT2A. This Mesocricetus auratus (Golden hamster) protein is Dihydrolipoyllysine-residue succinyltransferase component of 2-oxoglutarate dehydrogenase complex, mitochondrial.